A 429-amino-acid polypeptide reads, in one-letter code: Endoglucanase type C (429 aa).

A signal peptide spans 1–18 (MKSLSLILSALAVQVAVA). Pyrrolidone carboxylic acid is present on glutamine 19. Disulfide bonds link cysteine 36-cysteine 42, cysteine 66-cysteine 88, cysteine 78-cysteine 84, cysteine 156-cysteine 383, cysteine 190-cysteine 213, cysteine 194-cysteine 212, cysteine 233-cysteine 252, cysteine 241-cysteine 246, and cysteine 257-cysteine 333. The N-linked (GlcNAc...) asparagine glycan is linked to asparagine 74. Residue glutamate 215 is the Nucleophile of the active site. The active-site Proton donor is the glutamate 220. Asparagine 265 and asparagine 318 each carry an N-linked (GlcNAc...) asparagine glycan.

This sequence belongs to the glycosyl hydrolase 7 (cellulase C) family.

The catalysed reaction is Endohydrolysis of (1-&gt;4)-beta-D-glucosidic linkages in cellulose, lichenin and cereal beta-D-glucans.. This is Endoglucanase type C from Fusarium oxysporum (Fusarium vascular wilt).